Reading from the N-terminus, the 102-residue chain is MFLFCFVLFCSLVFPLARGVFAWHNPAGNYGDIIVWHIYIYIYVNYTYINSFRSSYYSLTINGSTISLLKKYFLLQDLKQSVIMEKVCNCVFLKKDTDIYIC.

The first 19 residues, 1–19, serve as a signal peptide directing secretion; the sequence is MFLFCFVLFCSLVFPLARG.

This is an uncharacterized protein from Saccharomyces cerevisiae (strain ATCC 204508 / S288c) (Baker's yeast).